The primary structure comprises 677 residues: Envelope glycoprotein (677 aa).

A signal peptide spans 1 to 33 (MGSGYQLLQLPRERFRKTSFLVWVIILFQRAIS). Residues 34–651 (MPLGIVTNST…DLNLWTGWRQ (618 aa)) lie on the Extracellular side of the membrane. The N-linked (GlcNAc...) asparagine; by host glycan is linked to Asn41. Intrachain disulfides connect Cys54–Cys610, Cys109–Cys136, Cys122–Cys148, Cys512–Cys557, and Cys602–Cys609. Positions 55 to 202 (RDKLSSTSQL…HFWKATPAHE (148 aa)) are receptor-binding. Asn205, Asn229, Asn239, Asn258, Asn269, Asn297, Asn317, Asn318, Asn339, Asn406, Asn420, Asn435, and Asn463 each carry an N-linked (GlcNAc...) asparagine; by host glycan. A mucin-like region region spans residues 306 to 486 (NLHFQILSTH…PSQPGLTINT (181 aa)). Over residues 315-326 (HTNNSSDQSPAG) the composition is skewed to polar residues. Disordered stretches follow at residues 315 to 349 (HTNN…TDSP) and 361 to 484 (EEMS…GLTI). 2 stretches are compositionally biased toward polar residues: residues 363–423 (MSTQ…NETI) and 432–472 (QGSN…TSPG). Residues 525–540 (GAAVGLAWIPYFGPAA) are fusion peptide. The stretch at 555 to 596 (LICGLRQLANETTQALQLFLRATTELRTYSLLNRKAIDFLLQ) forms a coiled coil. Residue Asn564 is glycosylated (N-linked (GlcNAc...) asparagine; by host). The stretch at 616-635 (WTKNITDEINQIKHDFIDNP) forms a coiled coil. Asn619 is a glycosylation site (N-linked (GlcNAc...) asparagine; by host). The helical transmembrane segment at 652–672 (WIPAGIGIIGVIIAIIALLCI) threads the bilayer. S-palmitoyl cysteine; by host attachment occurs at residues Cys671 and Cys673. Residues 673–677 (CKILC) lie on the Cytoplasmic side of the membrane.

This sequence belongs to the filoviruses glycoprotein family. In terms of assembly, homotrimer; each monomer consists of a GP1 and a GP2 subunit linked by disulfide bonds. The resulting peplomers (GP1,2) protrude from the virus surface as spikes. Interacts with host integrin alpha-V/ITGAV. Interacts with host CLEC10A. Binds also to host CD209 and CLEC4M/DC-SIGN(R). Interacts with host FOLR1. Interacts with BST2; this interaction inhibits the antiviral effect of BST2 and this allows viral release from infected cells. Interacts with host FCN1; this interaction enhances viral entry. Interacts with host TLR4; this interaction induces cell death in T-lymphocytes or proinflammatory cytokines and SOCS1 production in monocytes. As to quaternary structure, interacts with host entry receptor NPC1. GP1 and GP2delta are part of GP1,2delta soluble complexes released by ectodomain shedding. The signal peptide region modulates GP's high mannose glycosylation, thereby determining the efficiency of the interactions with DC-SIGN(R). Post-translationally, N-glycosylated. In terms of processing, O-glycosylated in the mucin-like region. Palmitoylation of GP2 is not required for its function. Post-translationally, specific enzymatic cleavages in vivo yield mature proteins. The precursor is processed into GP1 and GP2 by host cell furin in the trans Golgi, and maybe by other host proteases, to yield the mature GP1 and GP2 proteins. The cleavage site corresponds to the furin optimal cleavage sequence [KR]-X-[KR]-R. This cleavage does not seem to be required for function. After the internalization of the virus into cell endosomes, GP1 C-terminus is removed by the endosomal proteases cathepsin B, cathepsin L, or both, leaving a 19-kDa N-terminal fragment which is further digested by cathepsin B. Proteolytic processing of GP1,2 by host ADAM17 can remove the transmembrane anchor of GP2 and leads to shedding of complexes consisting in GP1 and truncated GP2 (GP1,2delta).

It localises to the virion membrane. Its subcellular location is the host cell membrane. The protein resides in the secreted. In terms of biological role, trimeric GP1,2 complexes form the virion surface spikes and mediate the viral entry processes, with GP1 acting as the receptor-binding subunit and GP2 as the membrane fusion subunit. At later times of infection, down-regulates the expression of various host cell surface molecules that are essential for immune surveillance and cell adhesion. Down-modulates several integrins including ITGA1, ITGA2, ITGA3, ITGA4, ITGA5, ITGA6, ITGAV and ITGB1. This decrease in cell adhesion molecules may lead to cell detachment, contributing to the disruption of blood vessel integrity and hemorrhages developed during infection (cytotoxicity). Interacts with host TLR4 and thereby stimulates the differentiation and activation of monocytes leading to bystander death of T-lymphocytes. Down-regulates as well the function of host natural killer cells. Counteracts the antiviral effect of host BST2/tetherin that restricts release of progeny virions from infected cells. However, cooperates with VP40 and host BST2 to activate canonical NF-kappa-B pathway in a manner dependent on neddylation. Functions as a decoy for anti-GP1,2 antibodies thereby contributing to viral immune evasion. Interacts and activates host macrophages and dendritic cells inducing up-regulation of cytokine transcription. This effect is mediated throught activation of host TLR4. Functionally, responsible for binding to the receptor(s) on target cells. Interacts with CD209/DC-SIGN and CLEC4M/DC-SIGNR which act as cofactors for virus entry into dendritic cells (DCs) and endothelial cells. Binding to the macrophage specific lectin CLEC10A also seems to enhance virus infectivity. Interaction with FOLR1/folate receptor alpha may be a cofactor for virus entry in some cell types, although results are contradictory. Members of the Tyro3 receptor tyrosine kinase family also seem to be cell entry factors in filovirus infection. Once attached, the virions are internalized through clathrin-dependent endocytosis and/or macropinocytosis. After internalization of the virus into the endosomes of the host cell, proteolysis of GP1 by two cysteine proteases, CTSB/cathepsin B and CTSL/cathepsin L removes the glycan cap and allows GP1 binding to the host entry receptor NPC1. NPC1-binding, Ca(2+) and acidic pH induce a conformational change of GP2, which unmasks its fusion peptide and permit membranes fusion. Its function is as follows. Acts as a class I viral fusion protein. Under the current model, the protein has at least 3 conformational states: pre-fusion native state, pre-hairpin intermediate state, and post-fusion hairpin state. During viral and target cell membrane fusion, the coiled coil regions (heptad repeats) assume a trimer-of-hairpins structure, positioning the fusion peptide in close proximity to the C-terminal region of the ectodomain. The formation of this structure appears to drive apposition and subsequent fusion of viral and target cell membranes. Responsible for penetration of the virus into the cell cytoplasm by mediating the fusion of the membrane of the endocytosed virus particle with the endosomal membrane. Low pH in endosomes induces an irreversible conformational change in GP2, releasing the fusion hydrophobic peptide. This Reston ebolavirus (strain Reston-89) (REBOV) protein is Envelope glycoprotein (GP).